Reading from the N-terminus, the 230-residue chain is Phosphoglycerate mutase-like protein 4 (230 aa).

Histidine 21 functions as the Tele-phosphohistidine intermediate in the catalytic mechanism. Residue glutamate 96 is the Proton donor/acceptor of the active site.

This sequence belongs to the phosphoglycerate mutase family.

Its function is as follows. May play a role in carbohydrates metabolism. This is Phosphoglycerate mutase-like protein 4 from Arabidopsis thaliana (Mouse-ear cress).